The primary structure comprises 974 residues: Ephrin type-B receptor 3 (974 aa).

Residues Met-1 to Gly-16 form the signal peptide. The Extracellular segment spans residues Leu-17 to Met-534. The Eph LBD domain maps to Glu-18–Ala-196. Residues Cys-60 and Cys-178 are joined by a disulfide bond. 2 Fibronectin type-III domains span residues Val-318 to Ala-426 and Ala-427 to Asp-522. N-linked (GlcNAc...) asparagine glycans are attached at residues Asn-330 and Asn-420. Residues Val-535–Val-555 form a helical membrane-spanning segment. The Cytoplasmic segment spans residues Cys-556–Val-974. Tyr-590 carries the post-translational modification Phosphotyrosine; by autocatalysis. The region spanning Val-609–Ile-872 is the Protein kinase domain. ATP-binding positions include Ile-615–Val-623 and Lys-641. The active-site Proton acceptor is Asp-734. The SAM domain maps to Thr-901–Gln-965. A PDZ-binding motif is present at residues Val-972 to Val-974.

This sequence belongs to the protein kinase superfamily. Tyr protein kinase family. Ephrin receptor subfamily. In terms of assembly, heterotetramer upon binding of the ligand. The heterotetramer is composed of an ephrin dimer and a receptor dimer. Oligomerization is probably required to induce biological responses. Post-translationally, phosphorylated. Autophosphorylates upon ligand-binding. Autophosphorylation on Tyr-590 is required for interaction with SH2 domain-containing proteins. In terms of tissue distribution, expressed in the embryo in pre-somitic mesoderm, caudal somites, midbrain, and cement gland. Most abundant in adult brain, eye, heart, lung and ovary. Lower levels in intestine, kidney, oviduct and pharynx.

Its subcellular location is the cell membrane. It localises to the cell projection. The protein resides in the dendrite. The enzyme catalyses L-tyrosyl-[protein] + ATP = O-phospho-L-tyrosyl-[protein] + ADP + H(+). Functionally, receptor tyrosine kinase which binds promiscuously transmembrane ephrin-B family ligands residing on adjacent cells, leading to contact-dependent bidirectional signaling into neighboring cells. The signaling pathway downstream of the receptor is referred to as forward signaling while the signaling pathway downstream of the ephrin ligand is referred to as reverse signaling. Generally has an overlapping and redundant function with EPHB2. Like EPHB2, functions in axon guidance during development. In addition to its role in axon guidance also plays an important redundant role with other ephrin-B receptors in development and maturation of dendritic spines and the formation of excitatory synapses. May control other aspects of development through regulation of cell migration and positioning. The sequence is that of Ephrin type-B receptor 3 (ephb3) from Xenopus laevis (African clawed frog).